Reading from the N-terminus, the 180-residue chain is GTP cyclohydrolase 1 (180 aa).

The Zn(2+) site is built by Cys71, His74, and Cys142.

Belongs to the GTP cyclohydrolase I family. Toroid-shaped homodecamer, composed of two pentamers of five dimers.

The catalysed reaction is GTP + H2O = 7,8-dihydroneopterin 3'-triphosphate + formate + H(+). It functions in the pathway cofactor biosynthesis; 7,8-dihydroneopterin triphosphate biosynthesis; 7,8-dihydroneopterin triphosphate from GTP: step 1/1. The protein is GTP cyclohydrolase 1 (folE) of Helicobacter pylori (strain ATCC 700392 / 26695) (Campylobacter pylori).